A 177-amino-acid chain; its full sequence is R-phycoerythrin beta chain (177 aa).

Positions 50 and 61 each coordinate phycourobilin. An N4-methylasparagine modification is found at N72. Positions 82 and 158 each coordinate (2R,3E)-phycoerythrobilin.

Belongs to the phycobiliprotein family. As to quaternary structure, heterodimer of an alpha and a beta chain. Post-translationally, contains two covalently linked phycoerythrobilin chromophores and one covalently linked phycourobilin chromophore.

The protein localises to the plastid. It is found in the chloroplast thylakoid membrane. Light-harvesting photosynthetic bile pigment-protein from the phycobiliprotein complex. The protein is R-phycoerythrin beta chain (cpeB) of Pyropia yezoensis (Susabi-nori).